The primary structure comprises 144 residues: Toxin MT0934 (144 aa).

Its function is as follows. Toxic component of a type II toxin-antitoxin (TA) system. Its toxic effect is neutralized by coexpression with cognate antitoxin MT0933. The protein is Toxin MT0934 of Mycobacterium tuberculosis (strain CDC 1551 / Oshkosh).